Here is a 184-residue protein sequence, read N- to C-terminus: Exosome complex protein LRP1 (184 aa).

Residues Asp157–Lys184 are disordered. Residues Lys164 to Lys184 are compositionally biased toward basic residues.

This sequence belongs to the C1D family. Associates with nuclear form of the RNA exosome complex. Interacts with RRP4, RRP6, RRP45 and RRP46.

It is found in the nucleus. Required for exosome-dependent processing of pre-rRNA and small nucleolar RNA (snRNA) precursors. Involved in processing of 35S pre-rRNA at the A0, A1 and A2 sites. Required for activity of RRP6 in 7S pre-rRNA processing. Also has a role in 3'-processing of U4 and U5 small nuclear RNAs (snRNAs). Acts as a mRNA export factor. Mediates mRNA degradation upon UV irradiation. Maintains genome integrity where it is involved in both non-homologous end joining (NHEJ) and homologous recombination pathway repair of double strand DNA breaks. During NHEJ, required for joining 3'-overhanging ends. Also involved in telomere length regulation and maintenance. This chain is Exosome complex protein LRP1 (LRP1), found in Saccharomyces cerevisiae (strain ATCC 204508 / S288c) (Baker's yeast).